We begin with the raw amino-acid sequence, 476 residues long: Bifunctional protein HldE (476 aa).

Residues 1 to 319 (MKVTLPAFEK…EALKSHQGES (319 aa)) are ribokinase. 195–198 (NMSE) lines the ATP pocket. The active site involves D264. Residues 345-476 (MTNGCFDILH…AIIQNIMSRH (132 aa)) form a cytidylyltransferase region.

The protein in the N-terminal section; belongs to the carbohydrate kinase PfkB family. It in the C-terminal section; belongs to the cytidylyltransferase family. In terms of assembly, homodimer.

The enzyme catalyses D-glycero-beta-D-manno-heptose 7-phosphate + ATP = D-glycero-beta-D-manno-heptose 1,7-bisphosphate + ADP + H(+). It carries out the reaction D-glycero-beta-D-manno-heptose 1-phosphate + ATP + H(+) = ADP-D-glycero-beta-D-manno-heptose + diphosphate. It functions in the pathway nucleotide-sugar biosynthesis; ADP-L-glycero-beta-D-manno-heptose biosynthesis; ADP-L-glycero-beta-D-manno-heptose from D-glycero-beta-D-manno-heptose 7-phosphate: step 1/4. The protein operates within nucleotide-sugar biosynthesis; ADP-L-glycero-beta-D-manno-heptose biosynthesis; ADP-L-glycero-beta-D-manno-heptose from D-glycero-beta-D-manno-heptose 7-phosphate: step 3/4. In terms of biological role, catalyzes the phosphorylation of D-glycero-D-manno-heptose 7-phosphate at the C-1 position to selectively form D-glycero-beta-D-manno-heptose-1,7-bisphosphate. Its function is as follows. Catalyzes the ADP transfer from ATP to D-glycero-beta-D-manno-heptose 1-phosphate, yielding ADP-D-glycero-beta-D-manno-heptose. The sequence is that of Bifunctional protein HldE from Shewanella amazonensis (strain ATCC BAA-1098 / SB2B).